A 321-amino-acid chain; its full sequence is Phospho-N-acetylmuramoyl-pentapeptide-transferase (321 aa).

The next 9 helical transmembrane spans lie at 1–21, 53–73, 77–97, 110–130, 145–165, 174–194, 200–220, 226–248, and 301–321; these read MSLL…FALM, TMGG…VGGW, LQPT…LGFW, GLKA…LTLV, LGVW…LVGF, GLDG…AVIA, YNVM…FVYN, IFMG…ILLH, and IDIV…ATII.

This sequence belongs to the glycosyltransferase 4 family. MraY subfamily. Mg(2+) serves as cofactor.

It is found in the cell membrane. The catalysed reaction is UDP-N-acetyl-alpha-D-muramoyl-L-alanyl-gamma-D-glutamyl-L-lysyl-D-alanyl-D-alanine + di-trans,octa-cis-undecaprenyl phosphate = Mur2Ac(oyl-L-Ala-gamma-D-Glu-L-Lys-D-Ala-D-Ala)-di-trans,octa-cis-undecaprenyl diphosphate + UMP. It functions in the pathway cell wall biogenesis; peptidoglycan biosynthesis. In terms of biological role, catalyzes the initial step of the lipid cycle reactions in the biosynthesis of the cell wall peptidoglycan: transfers peptidoglycan precursor phospho-MurNAc-pentapeptide from UDP-MurNAc-pentapeptide onto the lipid carrier undecaprenyl phosphate, yielding undecaprenyl-pyrophosphoryl-MurNAc-pentapeptide, known as lipid I. The polypeptide is Phospho-N-acetylmuramoyl-pentapeptide-transferase (Lactiplantibacillus plantarum (strain ATCC BAA-793 / NCIMB 8826 / WCFS1) (Lactobacillus plantarum)).